Consider the following 338-residue polypeptide: Ketol-acid reductoisomerase (NADP(+)) (338 aa).

One can recognise a KARI N-terminal Rossmann domain in the interval 1–181; sequence MQIFYDKDCD…GGGRTGIIET (181 aa). Residues 24 to 27, Arg47, Ser50, Ser52, and 82 to 85 contribute to the NADP(+) site; these read YGSQ and DEFQ. His107 is an active-site residue. Gly133 lines the NADP(+) pocket. The KARI C-terminal knotted domain occupies 182–327; the sequence is SFREETETDL…SKLRAMMPWI (146 aa). Mg(2+) is bound by residues Asp190, Glu194, Glu226, and Glu230. Ser251 lines the substrate pocket.

It belongs to the ketol-acid reductoisomerase family. Mg(2+) serves as cofactor.

It carries out the reaction (2R)-2,3-dihydroxy-3-methylbutanoate + NADP(+) = (2S)-2-acetolactate + NADPH + H(+). It catalyses the reaction (2R,3R)-2,3-dihydroxy-3-methylpentanoate + NADP(+) = (S)-2-ethyl-2-hydroxy-3-oxobutanoate + NADPH + H(+). It functions in the pathway amino-acid biosynthesis; L-isoleucine biosynthesis; L-isoleucine from 2-oxobutanoate: step 2/4. The protein operates within amino-acid biosynthesis; L-valine biosynthesis; L-valine from pyruvate: step 2/4. Its function is as follows. Involved in the biosynthesis of branched-chain amino acids (BCAA). Catalyzes an alkyl-migration followed by a ketol-acid reduction of (S)-2-acetolactate (S2AL) to yield (R)-2,3-dihydroxy-isovalerate. In the isomerase reaction, S2AL is rearranged via a Mg-dependent methyl migration to produce 3-hydroxy-3-methyl-2-ketobutyrate (HMKB). In the reductase reaction, this 2-ketoacid undergoes a metal-dependent reduction by NADPH to yield (R)-2,3-dihydroxy-isovalerate. This Acinetobacter baylyi (strain ATCC 33305 / BD413 / ADP1) protein is Ketol-acid reductoisomerase (NADP(+)).